We begin with the raw amino-acid sequence, 504 residues long: ATP synthase subunit alpha (504 aa).

170 to 177 (GDRQTGKT) lines the ATP pocket.

It belongs to the ATPase alpha/beta chains family. As to quaternary structure, F-type ATPases have 2 components, CF(1) - the catalytic core - and CF(0) - the membrane proton channel. CF(1) has five subunits: alpha(3), beta(3), gamma(1), delta(1), epsilon(1). CF(0) has four main subunits: a(1), b(1), b'(1) and c(9-12).

It is found in the cellular thylakoid membrane. The enzyme catalyses ATP + H2O + 4 H(+)(in) = ADP + phosphate + 5 H(+)(out). Produces ATP from ADP in the presence of a proton gradient across the membrane. The alpha chain is a regulatory subunit. The protein is ATP synthase subunit alpha of Prochlorococcus marinus (strain NATL2A).